Here is a 1294-residue protein sequence, read N- to C-terminus: Ethylene-insensitive protein 2 (1294 aa).

At 1-12 the chain is on the cytoplasmic side; the sequence is MEAEIVNVRPQL. The helical transmembrane segment at 13-33 threads the bilayer; the sequence is GFIQRMVPALLPVLLVSVGYI. At 34–50 the chain is on the extracellular side; sequence DPGKWVANIEGGARFGY. A helical transmembrane segment spans residues 51-71; that stretch reads DLVAITLLFNFAAILCQYVAA. Over 72–105 the chain is Cytoplasmic; it reads RISVVTGKHLAQICNEEYDKWTCMFLGIQAEFSA. The chain crosses the membrane as a helical span at residues 106 to 126; that stretch reads ILLDLTMVVGVAHALNLLFGV. Residue glutamate 127 is a topological domain, extracellular. Residues 128 to 148 form a helical membrane-spanning segment; the sequence is LSTGVFLAAMDAFLFPVFASF. The Cytoplasmic portion of the chain corresponds to 149–155; it reads LENGMAN. Residues 156–176 form a helical membrane-spanning segment; that stretch reads TVSIYSAGLVLLLYVSGVLLS. Residues 177 to 194 are Extracellular-facing; the sequence is QSEIPLSMNGVLTRLNGE. Residues 195-215 traverse the membrane as a helical segment; it reads SAFALMGLLGASIVPHNFYIH. Residues 216–237 are Cytoplasmic-facing; the sequence is SYFAGESTSSSDVDKSSLCQDH. Residues 238–258 form a helical membrane-spanning segment; it reads LFAIFGVFSGLSLVNYVLMNA. Residues 259–287 lie on the Extracellular side of the membrane; sequence AANVFHSTGLVVLTFHDALSLMEQVFMSP. A helical transmembrane segment spans residues 288–308; that stretch reads LIPVVFLMLLFFSSQITALAW. Residues 309-334 lie on the Cytoplasmic side of the membrane; the sequence is AFGGEVVLHDFLKIEIPAWLHRATIR. The next 2 membrane-spanning stretches (helical) occupy residues 335 to 355 and 356 to 376; these read ILAVAPALYCVWTSGADGIYQ and LLIFTQVLVAMMLPCSVIPLF. At 377-397 the chain is on the cytoplasmic side; sequence RIASSRQIMGVHKIPQVGEFL. The helical transmembrane segment at 398-418 threads the bilayer; it reads ALTTFLGFLGLNVVFVVEMVF. The Extracellular portion of the chain corresponds to 419 to 440; that stretch reads GSSDWAGGLRWNTVMGTSIQYT. A helical transmembrane segment spans residues 441–461; the sequence is TLLVSSCASLCLILWLAATPL. Residues 462–1294 are Cytoplasmic-facing; sequence KSASNRAEAQ…KNVTAYGSLG (833 aa). Disordered regions lie at residues 534-561 and 623-662; these read TDQEIRSSPPEERELDVKYSTSQVSSLK and ETEEATKAAPTSNFTVGSDGPPSFRSLSGEGGSGTGSLSR. Over residues 536-550 the composition is skewed to basic and acidic residues; the sequence is QEIRSSPPEERELDV. 3 positions are modified to phosphoserine: serine 645, serine 659, and serine 757. Threonine 819 carries the phosphothreonine modification. Serine 924 is subject to Phosphoserine. A Nuclear localization signal motif is present at residues 1262-1269; that stretch reads LKRYKRRL. Residues 1269-1294 are disordered; the sequence is LSNKPVGMNQDGPGSRKNVTAYGSLG. Residue serine 1283 is modified to Phosphoserine.

This sequence belongs to the NRAMP (TC 2.A.55) family. As to quaternary structure, interacts (via NLS) with ETR1. Interacts (via C-terminus) with EER5 and the COP9 signalosome subunits CSN3, CSN6A and CSN6B. Interacts with ETP1 and ETP2. Interacts with CTR1. Interacts with all members of the ethylene receptor family, including ETR1, ETR2, ERS1, ERS2 and EIN4. Binds to MRF3/ECIP1. Interacts with several P-body components, such as XRN4/EIN5, PAB2, PAB4 and PAB8. Binds to ENAP1 in the presence of ethylene; this reaction facilitates its association with histone. Post-translationally, phosphorylated by CTR1 on at least 4 sites. Phosphorylation of Ser-645 and Ser-924 is involved in repressing EIN2 signaling. Loss of phosphorylation results in nuclear localization of the C-terminus of EIN2. Localized to the guard cells after methyl jasmonate treatment.

Its subcellular location is the endoplasmic reticulum membrane. The protein localises to the nucleus. It localises to the cytoplasm. In terms of biological role, central factor in signaling pathways regulated by ethylene (ET) and involved in various processes including development, plant defense, senescence, nucleotide sugar flux, and tropisms. Necessary for ethylene-mediated gene regulation, and for the induction of some genes by ozone. Acts downstream of ET receptors, and upstream of ethylene regulated transcription factors. Required for cytokinin-mediated processes. Seems to be implicated in cross-talk between ET, jasmonate and other pathways. Probably not involved in iron uptake. Has a short half-life and undergoes rapid proteasome-mediated turnover in the absence of ethylene. Required for ethylene-induced EIN3 stabilization via proteasomal degradation of EBF1/EBF2 proteins. Regulates the leaf senescence induced by methyl jasmonate, ethylene and abscisic acid. Required during salt stress to confer resistance. Trafficking signal inducing ethylene response. The nuclear localization is both necessary and sufficient to activate EIN3-mediated transcription and ethylene responses. Involved in ethylene (ET)-mediated signaling pathways by triggering histone acetylation of H3K14 and H3K23 in an ENAP1-dependent manner, thus influencing the expression of ethylene-responsive genes. Necessary and sufficient for 3'-UTR-mediated translational repression of EBF1 and EBF2 mRNAs. Ethylene induces EIN2-CEND to associate with 3' UTRs in cytoplasmic foci and target EBF1/2 mRNAs to cytoplasmic processing-body (P-body). MPK6 regulates the cleavage and nuclear translocation of EIN2-CEND under methyl jasmonate treatment. Required for EIN3 accumulation. This chain is Ethylene-insensitive protein 2, found in Arabidopsis thaliana (Mouse-ear cress).